Here is a 2056-residue protein sequence, read N- to C-terminus: E3 ubiquitin-protein ligase TRIP12 (2056 aa).

2 stretches are compositionally biased toward polar residues: residues 1–10 and 18–27; these read MSSRPNNNPG and RNTAGAQPQE. A disordered region spans residues 1–440; the sequence is MSSRPNNNPG…SGESESDDSE (440 aa). Over residues 39-51 the composition is skewed to basic and acidic residues; sequence AENKTHSLPESRK. 2 stretches are compositionally biased toward polar residues: residues 58–67 and 153–168; these read KVQSNTTSGP and SQEQPFPSASLPSTSK. Low complexity-rich tracts occupy residues 213 to 226 and 234 to 253; these read LSKLASKSATSAKA and SSSSASTSSSSSAVASVSAA. Composition is skewed to polar residues over residues 317–327 and 363–375; these read PGSSKTETSKP and QKTTGSCASTSRR. Over residues 383–395 the composition is skewed to basic and acidic residues; that stretch reads AAAEARRQEKMAD. The span at 415-433 shows a compositional bias: low complexity; that stretch reads GAAASSSVAGAVGMTTSGE. The WWE domain occupies 791–905; the sequence is MLKKGNAQNT…DPELAKSFIK (115 aa). The segment covering 1027–1042 has biased composition (low complexity); sequence TTISTGSGTASGNSAA. 3 disordered regions span residues 1027–1147, 1465–1500, and 1632–1651; these read TTIS…ASKD, EEEESAKDTVGGKRGRAQTAPTKTSPRNSKKHDELW, and TNPEINQSDSQDSRVAPRLD. Basic residues predominate over residues 1069–1082; it reads KRKRLPKRGPRRPK. Residues 1085-1094 are compositionally biased toward basic and acidic residues; that stretch reads PPRDEDKVDN. 2 stretches are compositionally biased toward polar residues: residues 1095 to 1106 and 1119 to 1129; these read QAKSPTTTQSPK and RLSTQSNSNNI. The segment at 1560–1634 is K-box; it reads EIIPTSEFNN…AMQRLLDTNP (75 aa). The 108-residue stretch at 1949-2056 folds into the HECT domain; sequence PDHGYTHDSR…REGQQSFHLS (108 aa). Catalysis depends on Cys-2023, which acts as the Glycyl thioester intermediate.

Belongs to the UPL family. K-HECT subfamily.

The protein resides in the nucleus. Its subcellular location is the nucleoplasm. The enzyme catalyses S-ubiquitinyl-[E2 ubiquitin-conjugating enzyme]-L-cysteine + [acceptor protein]-L-lysine = [E2 ubiquitin-conjugating enzyme]-L-cysteine + N(6)-ubiquitinyl-[acceptor protein]-L-lysine.. It functions in the pathway protein modification; protein ubiquitination. Its function is as follows. E3 ubiquitin-protein ligase involved in ubiquitin fusion degradation (UFD) pathway and regulation of DNA repair. Part of the ubiquitin fusion degradation (UFD) pathway, a process that mediates ubiquitination of protein at their N-terminus, regardless of the presence of lysine residues in target proteins. Acts as a key regulator of DNA damage response by acting as a suppressor of RNF168, an E3 ubiquitin-protein ligase that promotes accumulation of 'Lys-63'-linked histone H2A and H2AX at DNA damage sites, thereby acting as a guard against excessive spreading of ubiquitinated chromatin at damaged chromosomes. This Xenopus tropicalis (Western clawed frog) protein is E3 ubiquitin-protein ligase TRIP12 (trip12).